We begin with the raw amino-acid sequence, 220 residues long: Probable septum site-determining protein MinC (220 aa).

It belongs to the MinC family. Interacts with MinD and FtsZ.

Cell division inhibitor that blocks the formation of polar Z ring septums. Rapidly oscillates between the poles of the cell to destabilize FtsZ filaments that have formed before they mature into polar Z rings. Prevents FtsZ polymerization. The sequence is that of Probable septum site-determining protein MinC from Vibrio vulnificus (strain CMCP6).